The sequence spans 176 residues: Adenine phosphoribosyltransferase (176 aa).

Belongs to the purine/pyrimidine phosphoribosyltransferase family. Homodimer.

It is found in the cytoplasm. The enzyme catalyses AMP + diphosphate = 5-phospho-alpha-D-ribose 1-diphosphate + adenine. It participates in purine metabolism; AMP biosynthesis via salvage pathway; AMP from adenine: step 1/1. In terms of biological role, catalyzes a salvage reaction resulting in the formation of AMP, that is energically less costly than de novo synthesis. The chain is Adenine phosphoribosyltransferase from Borreliella burgdorferi (strain ATCC 35210 / DSM 4680 / CIP 102532 / B31) (Borrelia burgdorferi).